We begin with the raw amino-acid sequence, 296 residues long: 4-hydroxybenzoate octaprenyltransferase (296 aa).

8 consecutive transmembrane segments (helical) span residues 29–49 (IGIY…ADGV), 55–75 (LLIF…INDF), 102–122 (AWIT…LTNA), 146–166 (YYPQ…AFTA), 169–189 (GELP…TVAY), 219–239 (LIIG…GNRF), 241–261 (LGLC…WEAW), and 275–295 (FLHN…DYAL).

It belongs to the UbiA prenyltransferase family. The cofactor is Mg(2+).

The protein localises to the cell inner membrane. The enzyme catalyses all-trans-octaprenyl diphosphate + 4-hydroxybenzoate = 4-hydroxy-3-(all-trans-octaprenyl)benzoate + diphosphate. Its pathway is cofactor biosynthesis; ubiquinone biosynthesis. Functionally, catalyzes the prenylation of para-hydroxybenzoate (PHB) with an all-trans polyprenyl group. Mediates the second step in the final reaction sequence of ubiquinone-8 (UQ-8) biosynthesis, which is the condensation of the polyisoprenoid side chain with PHB, generating the first membrane-bound Q intermediate 3-octaprenyl-4-hydroxybenzoate. This chain is 4-hydroxybenzoate octaprenyltransferase, found in Pseudomonas aeruginosa (strain LESB58).